The following is a 131-amino-acid chain: Small ribosomal subunit protein uS11 (131 aa).

Belongs to the universal ribosomal protein uS11 family. In terms of assembly, part of the 30S ribosomal subunit. Interacts with proteins S7 and S18. Binds to IF-3.

In terms of biological role, located on the platform of the 30S subunit, it bridges several disparate RNA helices of the 16S rRNA. Forms part of the Shine-Dalgarno cleft in the 70S ribosome. This is Small ribosomal subunit protein uS11 from Neisseria gonorrhoeae (strain ATCC 700825 / FA 1090).